The sequence spans 285 residues: (2Z,6Z)-farnesyl diphosphate synthase CPT6, chloroplastic (285 aa).

The N-terminal 30 residues, 1 to 30 (MNSLFVGRPIVKSSYNVYTLPSSICGGHFF), are a transit peptide targeting the chloroplast. The active site involves aspartate 65.

This sequence belongs to the UPP synthase family. Mg(2+) is required as a cofactor. As to expression, expressed in roots and red fruits.

It localises to the plastid. Its subcellular location is the chloroplast. It catalyses the reaction 2 isopentenyl diphosphate + dimethylallyl diphosphate = (2Z,6Z)-farnesyl diphosphate + 2 diphosphate. The catalysed reaction is isopentenyl diphosphate + dimethylallyl diphosphate = neryl diphosphate + diphosphate. It carries out the reaction neryl diphosphate + isopentenyl diphosphate = (2Z,6Z)-farnesyl diphosphate + diphosphate. Uses neryl diphosphate to catalyze the cis-prenyl chain elongation and produce the 15 carbon product (2Z,6Z)-farnesyl diphosphate. This is (2Z,6Z)-farnesyl diphosphate synthase CPT6, chloroplastic from Solanum lycopersicum (Tomato).